Reading from the N-terminus, the 442-residue chain is Chromosomal replication initiator protein DnaA (442 aa).

The domain I, interacts with DnaA modulators stretch occupies residues 1–75 (MDAWPRCLER…GNGEVALAVG (75 aa)). Residues 75–104 (GSRPRAPEPAPAAAAVPSAPQAAPMVPFAG) are domain II. The segment at 105-322 (NLDSHYTFAN…GALNTLVARA (218 aa)) is domain III, AAA+ region. Residues glycine 150, glycine 152, lysine 153, and threonine 154 each contribute to the ATP site. The segment at 323 to 442 (NFTGRSITVE…WEKLIRKLSE (120 aa)) is domain IV, binds dsDNA.

This sequence belongs to the DnaA family. As to quaternary structure, oligomerizes as a right-handed, spiral filament on DNA at oriC.

It localises to the cytoplasm. Its function is as follows. Plays an essential role in the initiation and regulation of chromosomal replication. ATP-DnaA binds to the origin of replication (oriC) to initiate formation of the DNA replication initiation complex once per cell cycle. Binds the DnaA box (a 9 base pair repeat at the origin) and separates the double-stranded (ds)DNA. Forms a right-handed helical filament on oriC DNA; dsDNA binds to the exterior of the filament while single-stranded (ss)DNA is stabiized in the filament's interior. The ATP-DnaA-oriC complex binds and stabilizes one strand of the AT-rich DNA unwinding element (DUE), permitting loading of DNA polymerase. After initiation quickly degrades to an ADP-DnaA complex that is not apt for DNA replication. Binds acidic phospholipids. The polypeptide is Chromosomal replication initiator protein DnaA (Xanthomonas euvesicatoria pv. vesicatoria (strain 85-10) (Xanthomonas campestris pv. vesicatoria)).